Consider the following 34-residue polypeptide: MNWHVLAQLTVLAFVIAVGPITLIWLSNKKDALL.

Residues 5-25 (VLAQLTVLAFVIAVGPITLIW) traverse the membrane as a helical segment.

The protein belongs to the Psb30/Ycf12 family. In terms of assembly, PSII is composed of 1 copy each of membrane proteins PsbA, PsbB, PsbC, PsbD, PsbE, PsbF, PsbH, PsbI, PsbJ, PsbK, PsbL, PsbM, PsbT, PsbX, PsbY, PsbZ, Psb30/Ycf12, peripheral proteins of the oxygen-evolving complex and a large number of cofactors. It forms dimeric complexes.

The protein resides in the plastid. Its subcellular location is the chloroplast thylakoid membrane. Functionally, a core subunit of photosystem II (PSII), probably helps stabilize the reaction center. The chain is Photosystem II reaction center protein Psb30 from Cyanidioschyzon merolae (strain NIES-3377 / 10D) (Unicellular red alga).